Reading from the N-terminus, the 197-residue chain is Ribosomal RNA large subunit methyltransferase E (197 aa).

S-adenosyl-L-methionine is bound by residues Gly50, Trp52, Asp70, Asp88, and Asp111. The active-site Proton acceptor is Lys151.

This sequence belongs to the class I-like SAM-binding methyltransferase superfamily. RNA methyltransferase RlmE family.

It is found in the cytoplasm. The enzyme catalyses uridine(2552) in 23S rRNA + S-adenosyl-L-methionine = 2'-O-methyluridine(2552) in 23S rRNA + S-adenosyl-L-homocysteine + H(+). Functionally, specifically methylates the uridine in position 2552 of 23S rRNA at the 2'-O position of the ribose in the fully assembled 50S ribosomal subunit. The sequence is that of Ribosomal RNA large subunit methyltransferase E from Syntrophobacter fumaroxidans (strain DSM 10017 / MPOB).